Reading from the N-terminus, the 177-residue chain is Large ribosomal subunit protein uL6 (177 aa).

The protein belongs to the universal ribosomal protein uL6 family. As to quaternary structure, part of the 50S ribosomal subunit.

Its function is as follows. This protein binds to the 23S rRNA, and is important in its secondary structure. It is located near the subunit interface in the base of the L7/L12 stalk, and near the tRNA binding site of the peptidyltransferase center. This is Large ribosomal subunit protein uL6 from Methanothermobacter thermautotrophicus (strain ATCC 29096 / DSM 1053 / JCM 10044 / NBRC 100330 / Delta H) (Methanobacterium thermoautotrophicum).